Reading from the N-terminus, the 734-residue chain is Cullin-4 (734 aa).

Residues 666–728 (DRQFELQASI…KEYLEREDND (63 aa)) enclose the Cullin neddylation domain. Residue Lys680 forms a Glycyl lysine isopeptide (Lys-Gly) (interchain with G-Cter in NEDD8) linkage.

Belongs to the cullin family. As to quaternary structure, component of the Clr4 methyltransferase complex (ClrC) composed of at least clr4, rik1, pcu4, rbx1, raf1 and raf2. The cullin pcu4, rik1, raf1, raf2 and the ring-box protein rbx1 are components of an E3 ubiquitin ligase, whose activity is essential for heterochromatin assembly. In terms of processing, neddylated; enhancing the ubiquitin-ligase activity.

Its subcellular location is the cytoplasm. The protein localises to the nucleus. It localises to the chromosome. The protein operates within protein modification; protein ubiquitination. Its function is as follows. Required, indirectly, for activation of ribonucleotide reductase through the degradation of the protein spd1, thereby supplying deoxyribonucleotides for DNA replication and repair. Also has a role as a scaffold for assembling ubiquitin ligases. Component of the Clr4 methyltransferase complex (ClrC) which contributes to the establishment of heterochromatin by specifically methylating histone H3 to form H3K9me. ClrC preferentially ubiquitylates H3K14 and ClrC-mediated H3 ubiquitination promotes clr4 methyltransferase activity for the methylation of H3K9. H3K9me represents a specific tag for epigenetic transcriptional repression by recruiting swi6/HP1 to methylated histones which leads to transcriptional silencing within centromeric heterochromatin, telomeric regions and at the silent mating-type loci. The chain is Cullin-4 (pcu4) from Schizosaccharomyces pombe (strain 972 / ATCC 24843) (Fission yeast).